The chain runs to 414 residues: MNDNQLAPVARPRSPLELLDTVPDSLLRRLKQYSGRLATEAVSAMQERLPFFADLEASQRASVALVVQTAVVNFVEWMHDPHSDVGYTAQAFELVPQDLTRRIALRQTVDMVRVTMEFFEEVVPLLARSEEQLTALTVGILKYSRDLAFTAATAYADAAEARGTWDSRMEASVVDAVVRGDTGPELLSRAAALNWDTTAPATVLVGTPAPGPNGSNSDGDSERASQDVRDTAARHGRAALTDVHGTWLVAIVSGQLSPTEKFLKDLLAAFADAPVVIGPTAPMLTAAHRSASEAISGMNAVAGWRGAPRPVLARELLPERALMGDASAIVALHTDVMRPLADAGPTLIETLDAYLDCGGAIEACARKLFVHPNTVRYRLKRITDFTGRDPTQPRDAYVLRVAATVGQLNYPTPH.

The tract at residues 204–230 (LVGTPAPGPNGSNSDGDSERASQDVRD) is disordered. Over residues 220 to 230 (DSERASQDVRD) the composition is skewed to basic and acidic residues.

This sequence belongs to the CdaR family.

This is an uncharacterized protein from Mycobacterium tuberculosis (strain CDC 1551 / Oshkosh).